A 139-amino-acid polypeptide reads, in one-letter code: D-ribose pyranase (139 aa).

Catalysis depends on H20, which acts as the Proton donor. Residues D28, H106, and 128-130 (YAN) each bind substrate.

The protein belongs to the RbsD / FucU family. RbsD subfamily. Homodecamer.

It localises to the cytoplasm. It catalyses the reaction beta-D-ribopyranose = beta-D-ribofuranose. It participates in carbohydrate metabolism; D-ribose degradation; D-ribose 5-phosphate from beta-D-ribopyranose: step 1/2. Its function is as follows. Catalyzes the interconversion of beta-pyran and beta-furan forms of D-ribose. The chain is D-ribose pyranase from Aeromonas salmonicida (strain A449).